We begin with the raw amino-acid sequence, 149 residues long: Large ribosomal subunit protein bL9 (149 aa).

It belongs to the bacterial ribosomal protein bL9 family.

Binds to the 23S rRNA. In Legionella pneumophila subsp. pneumophila (strain Philadelphia 1 / ATCC 33152 / DSM 7513), this protein is Large ribosomal subunit protein bL9.